The primary structure comprises 118 residues: Large ribosomal subunit protein bL20 (118 aa).

This sequence belongs to the bacterial ribosomal protein bL20 family.

Functionally, binds directly to 23S ribosomal RNA and is necessary for the in vitro assembly process of the 50S ribosomal subunit. It is not involved in the protein synthesizing functions of that subunit. The sequence is that of Large ribosomal subunit protein bL20 from Pectobacterium atrosepticum (strain SCRI 1043 / ATCC BAA-672) (Erwinia carotovora subsp. atroseptica).